Consider the following 426-residue polypeptide: 26S proteasome regulatory subunit 7B (426 aa).

Position 209–216 (209–216 (GPPGTGKT)) interacts with ATP.

The protein belongs to the AAA ATPase family.

It is found in the cytoplasm. It localises to the nucleus. In terms of biological role, the 26S proteasome is involved in the ATP-dependent degradation of ubiquitinated proteins. The regulatory (or ATPase) complex confers ATP dependency and substrate specificity to the 26S complex. The sequence is that of 26S proteasome regulatory subunit 7B (RPT1B) from Oryza sativa subsp. japonica (Rice).